The chain runs to 274 residues: Serine/threonine-protein kinase 1 (274 aa).

The region spanning 16-273 (AVLAPKVVNG…HSFLASRHDY (258 aa)) is the Protein kinase domain. Residues 22 to 30 (VVNGRFGKM) and K46 contribute to the ATP site. Catalysis depends on D134, which acts as the Proton acceptor.

The protein belongs to the protein kinase superfamily. Ser/Thr protein kinase family.

It catalyses the reaction L-seryl-[protein] + ATP = O-phospho-L-seryl-[protein] + ADP + H(+). It carries out the reaction L-threonyl-[protein] + ATP = O-phospho-L-threonyl-[protein] + ADP + H(+). The protein is Serine/threonine-protein kinase 1 (PK1) of Orgyia pseudotsugata multicapsid polyhedrosis virus (OpMNPV).